The sequence spans 693 residues: TBC1 domain family member 14 (693 aa).

Serine 91 carries the post-translational modification Phosphoserine. 2 disordered regions span residues 108–130 and 271–304; these read PSCAPPAPSSTEREQSVRKSSTF and NAQKDSKRIQKEYEDKAGRPSKPPSPKQNVRKNL. The span at 271 to 288 shows a compositional bias: basic and acidic residues; sequence NAQKDSKRIQKEYEDKAG. At serine 295 the chain carries Phosphoserine. Residues 401–611 form the Rab-GAP TBC domain; sequence GIPPSVRGKV…RIWDVFCRDG (211 aa).

As to quaternary structure, interacts with ULK1. May interact with RAB11A and RAB11B, but does not exhibit any GTPase-activating activity toward these proteins. Interacts with TRAPPC8.

It is found in the golgi apparatus. It localises to the cis-Golgi network. The protein localises to the trans-Golgi network. In terms of biological role, plays a role in the regulation of starvation-induced autophagosome formation. Together with the TRAPPIII complex, regulates a constitutive trafficking step from peripheral recycling endosomes to the early Golgi, maintaining the cycling pool of ATG9 required for initiation of autophagy. This chain is TBC1 domain family member 14 (TBC1D14), found in Homo sapiens (Human).